The primary structure comprises 984 residues: Ephrin type-B receptor 1 (984 aa).

An N-terminal signal peptide occupies residues 1–17 (MALDCLLLFLLASAVAA). The Extracellular segment spans residues 18 to 540 (MEETLMDTRT…YKSELREQLP (523 aa)). In terms of domain architecture, Eph LBD spans 19–201 (EETLMDTRTA…FFKKCPSIVQ (183 aa)). Fibronectin type-III domains follow at residues 322–432 (VPSG…TNQA) and 433–528 (APST…TLTD). Asparagine 334, asparagine 426, and asparagine 480 each carry an N-linked (GlcNAc...) asparagine glycan. The chain crosses the membrane as a helical span at residues 541–563 (LIAGSAAAGVVFVVSLVAISIVC). Residues 564–984 (SRKRAYSKEA…QMNQSPSVMA (421 aa)) lie on the Cytoplasmic side of the membrane. The residue at position 600 (tyrosine 600) is a Phosphotyrosine. One can recognise a Protein kinase domain in the interval 619–882 (VKIEEVIGAG…EIVNTLDKMI (264 aa)). Residues 625-633 (IGAGEFGEV) and lysine 651 each bind ATP. Aspartate 744 (proton acceptor) is an active-site residue. In terms of domain architecture, SAM spans 911-975 (TAFTTVDDWL…LSSIHSMRVQ (65 aa)). Position 928 is a phosphotyrosine; by autocatalysis (tyrosine 928). Residues 982–984 (VMA) carry the PDZ-binding motif.

The protein belongs to the protein kinase superfamily. Tyr protein kinase family. Ephrin receptor subfamily. Heterotetramer upon binding of the ligand. The heterotetramer is composed of an ephrin dimer and a receptor dimer. Oligomerization is probably required to induce biological responses. Interacts with EPHB6; transphosphorylates EPHB6 to form an active signaling complex. Interacts with PICK1. Interacts (through Tyr-594) with NCK1 (via SH2 domain); activates the JUN cascade to regulate cell adhesion. The ligand-activated form interacts (through Tyr-928) with GRB7 and GRB10 (via SH2 domains). The ligand-activated form interacts (residues within the catalytic domain) with GRB2 (via SH2 domain). Interacts with GRB2, SHC1 and SRC; activates the MAPK/ERK cascade to regulate cell migration. Interacts with CBL; regulates receptor degradation through ubiquitination. Interacts with ACP1. In terms of processing, phosphorylated. Autophosphorylation is stimulated by the ligand EFNB1. Required for interaction with SH2 domain-containing interactors, for activation of the MAPK/ERK and JUN signaling cascades and for ubiquitination by CBL. Post-translationally, ubiquitinated; (EFNB1)ligand-induced poly- and/or multi-ubiquitination by CBL is regulated by SRC and leads to lysosomal degradation. Expressed in neural stem and progenitor cells in the dentate gyrus. Expressed in myogenic progenitor cells.

The protein localises to the cell membrane. The protein resides in the early endosome membrane. Its subcellular location is the cell projection. It is found in the dendrite. It carries out the reaction L-tyrosyl-[protein] + ATP = O-phospho-L-tyrosyl-[protein] + ADP + H(+). In terms of biological role, receptor tyrosine kinase which binds promiscuously transmembrane ephrin-B family ligands residing on adjacent cells, leading to contact-dependent bidirectional signaling into neighboring cells. The signaling pathway downstream of the receptor is referred to as forward signaling while the signaling pathway downstream of the ephrin ligand is referred to as reverse signaling. Cognate/functional ephrin ligands for this receptor include EFNB1, EFNB2 and EFNB3. During nervous system development, regulates retinal axon guidance redirecting ipsilaterally ventrotemporal retinal ganglion cells axons at the optic chiasm midline. This probably requires repulsive interaction with EFNB2. In the adult nervous system together with EFNB3, regulates chemotaxis, proliferation and polarity of the hippocampus neural progenitors. In addition to its role in axon guidance also plays an important redundant role with other ephrin-B receptors in development and maturation of dendritic spines and synapse formation. May also regulate angiogenesis. More generally, may play a role in targeted cell migration and adhesion. Upon activation by EFNB1 and probably other ephrin-B ligands activates the MAPK/ERK and the JNK signaling cascades to regulate cell migration and adhesion respectively. Involved in the maintenance of the pool of satellite cells (muscle stem cells) by promoting their self-renewal and reducing their activation and differentiation. This chain is Ephrin type-B receptor 1 (Ephb1), found in Mus musculus (Mouse).